The sequence spans 485 residues: Glutamyl-tRNA(Gln) amidotransferase subunit A (485 aa).

Residues Lys-78 and Ser-153 each act as charge relay system in the active site. The active-site Acyl-ester intermediate is the Ser-177.

Belongs to the amidase family. GatA subfamily. Heterotrimer of A, B and C subunits.

The catalysed reaction is L-glutamyl-tRNA(Gln) + L-glutamine + ATP + H2O = L-glutaminyl-tRNA(Gln) + L-glutamate + ADP + phosphate + H(+). Its function is as follows. Allows the formation of correctly charged Gln-tRNA(Gln) through the transamidation of misacylated Glu-tRNA(Gln) in organisms which lack glutaminyl-tRNA synthetase. The reaction takes place in the presence of glutamine and ATP through an activated gamma-phospho-Glu-tRNA(Gln). This Geotalea daltonii (strain DSM 22248 / JCM 15807 / FRC-32) (Geobacter daltonii) protein is Glutamyl-tRNA(Gln) amidotransferase subunit A.